Consider the following 208-residue polypeptide: 2-phospho-L-lactate guanylyltransferase (208 aa).

This sequence belongs to the CofC family. As to quaternary structure, homodimer.

It catalyses the reaction (2S)-2-phospholactate + GTP + H(+) = (2S)-lactyl-2-diphospho-5'-guanosine + diphosphate. It functions in the pathway cofactor biosynthesis; coenzyme F420 biosynthesis. In terms of biological role, guanylyltransferase that catalyzes the activation of (2S)-2-phospholactate (2-PL) as (2S)-lactyl-2-diphospho-5'-guanosine, via the condensation of 2-PL with GTP. It is involved in the biosynthesis of coenzyme F420, a hydride carrier cofactor. The protein is 2-phospho-L-lactate guanylyltransferase of Methanosarcina acetivorans (strain ATCC 35395 / DSM 2834 / JCM 12185 / C2A).